We begin with the raw amino-acid sequence, 165 residues long: LOB domain-containing protein 21 (165 aa).

The 102-residue stretch at 10-111 folds into the LOB domain; sequence SSCAACKLLK…HDLAVARTRL (102 aa).

It belongs to the LOB domain-containing protein family.

This Arabidopsis thaliana (Mouse-ear cress) protein is LOB domain-containing protein 21 (LBD21).